A 495-amino-acid polypeptide reads, in one-letter code: Anaerobic nitric oxide reductase flavorubredoxin (495 aa).

The interval 30-210 (HKGTSYNSYL…PFSPLVTAKI (181 aa)) is zinc metallo-hydrolase. Residues His-79, Glu-81, Asp-83, His-147, Asp-166, and His-227 each contribute to the Fe cation site. The Flavodoxin-like domain occupies 254 to 393 (ITLFYDSMSN…ECREHGRQLA (140 aa)). FMN-binding positions include 260–264 (SMSNN) and 342–369 (AFGS…DISI). A Rubredoxin-like domain is found at 438-489 (DQAMLCTVCQWVYDPAQGEPDQLVAPGTPWAQVPDSFLCPGCGIGKEVFEPC). The Fe cation site is built by Cys-443, Cys-446, Cys-476, and Cys-479.

The protein in the N-terminal section; belongs to the zinc metallo-hydrolase group 3 family. Homotetramer. It depends on Fe cation as a cofactor. FMN serves as cofactor.

The protein resides in the cytoplasm. The protein operates within nitrogen metabolism; nitric oxide reduction. Anaerobic nitric oxide reductase; uses NADH to detoxify nitric oxide (NO), protecting several 4Fe-4S NO-sensitive enzymes. Has at least 2 reductase partners, only one of which (NorW, flavorubredoxin reductase) has been identified. NO probably binds to the di-iron center; electrons enter from the NorW at rubredoxin and are transferred sequentially to the FMN center and the di-iron center. Also able to function as an aerobic oxygen reductase. This chain is Anaerobic nitric oxide reductase flavorubredoxin, found in Aeromonas hydrophila subsp. hydrophila (strain ATCC 7966 / DSM 30187 / BCRC 13018 / CCUG 14551 / JCM 1027 / KCTC 2358 / NCIMB 9240 / NCTC 8049).